The following is a 314-amino-acid chain: Ribosomal protein L11 methyltransferase (314 aa).

S-adenosyl-L-methionine contacts are provided by T161, G182, D204, and N248.

Belongs to the methyltransferase superfamily. PrmA family.

It is found in the cytoplasm. It carries out the reaction L-lysyl-[protein] + 3 S-adenosyl-L-methionine = N(6),N(6),N(6)-trimethyl-L-lysyl-[protein] + 3 S-adenosyl-L-homocysteine + 3 H(+). Functionally, methylates ribosomal protein L11. This is Ribosomal protein L11 methyltransferase from Listeria monocytogenes serotype 1/2a (strain 10403S).